The chain runs to 129 residues: Small ribosomal subunit protein uS11 (129 aa).

It belongs to the universal ribosomal protein uS11 family. In terms of assembly, part of the 30S ribosomal subunit. Interacts with proteins S7 and S18. Binds to IF-3.

In terms of biological role, located on the platform of the 30S subunit, it bridges several disparate RNA helices of the 16S rRNA. Forms part of the Shine-Dalgarno cleft in the 70S ribosome. The chain is Small ribosomal subunit protein uS11 from Vibrio atlanticus (strain LGP32) (Vibrio splendidus (strain Mel32)).